We begin with the raw amino-acid sequence, 443 residues long: Xaa-Pro dipeptidase (443 aa).

Residues D246, D257, H339, E384, and E423 each coordinate Mn(2+).

This sequence belongs to the peptidase M24B family. Bacterial-type prolidase subfamily. The cofactor is Mn(2+).

It carries out the reaction Xaa-L-Pro dipeptide + H2O = an L-alpha-amino acid + L-proline. Splits dipeptides with a prolyl residue in the C-terminal position. The protein is Xaa-Pro dipeptidase of Salmonella choleraesuis (strain SC-B67).